We begin with the raw amino-acid sequence, 234 residues long: Leucyl/phenylalanyl-tRNA--protein transferase (234 aa).

The protein belongs to the L/F-transferase family.

The protein localises to the cytoplasm. The catalysed reaction is N-terminal L-lysyl-[protein] + L-leucyl-tRNA(Leu) = N-terminal L-leucyl-L-lysyl-[protein] + tRNA(Leu) + H(+). It catalyses the reaction N-terminal L-arginyl-[protein] + L-leucyl-tRNA(Leu) = N-terminal L-leucyl-L-arginyl-[protein] + tRNA(Leu) + H(+). It carries out the reaction L-phenylalanyl-tRNA(Phe) + an N-terminal L-alpha-aminoacyl-[protein] = an N-terminal L-phenylalanyl-L-alpha-aminoacyl-[protein] + tRNA(Phe). Functions in the N-end rule pathway of protein degradation where it conjugates Leu, Phe and, less efficiently, Met from aminoacyl-tRNAs to the N-termini of proteins containing an N-terminal arginine or lysine. This is Leucyl/phenylalanyl-tRNA--protein transferase from Salmonella arizonae (strain ATCC BAA-731 / CDC346-86 / RSK2980).